A 308-amino-acid polypeptide reads, in one-letter code: uncharacterized protein (308 aa).

Residues Leu-50, Asp-90, Asn-117, Tyr-182, Lys-186, Ile-222, and Thr-224 each contribute to the NADP(+) site. Residue Tyr-182 is the Proton acceptor of the active site. Lys-186 (lowers pKa of active site Tyr) is an active-site residue.

It belongs to the short-chain dehydrogenases/reductases (SDR) family.

This is an uncharacterized protein from Saccharomyces cerevisiae (strain ATCC 204508 / S288c) (Baker's yeast).